The following is a 360-amino-acid chain: G-box-binding factor 2 (360 aa).

The span at 1 to 16 shows a compositional bias: polar residues; sequence MGSNEEGNPTNNSDKP. Disordered regions lie at residues 1 to 26 and 150 to 275; these read MGSN…EQSN and KVGS…AETE. A compositionally biased stretch (low complexity) spans 164–184; the sequence is SQSSENDGSSNGSDGNTTGGE. The segment covering 198–208 has biased composition (polar residues); the sequence is TGERPSSQNSL. Positions 246–264 are enriched in basic and acidic residues; sequence NEKEVKREKRKQSNRESAR. The bZIP domain occupies 249–312; the sequence is EVKREKRKQS…EKLRLENEAI (64 aa). The segment at 251–270 is basic motif; it reads KREKRKQSNRESARRSRLRK. The segment at 277–312 is leucine-zipper; the sequence is LSVKVDALVAENMSLRSKLGQLNNESEKLRLENEAI. Positions 335–352 are enriched in polar residues; sequence NSVSGSKTVQHQLLNASP. The interval 335–360 is disordered; that stretch reads NSVSGSKTVQHQLLNASPITDPVAAS.

This sequence belongs to the bZIP family. DNA-binding heterodimer. Interacts with GBF4. Interacts with BZIP16 and BZIP68. In terms of tissue distribution, found in both light and dark grown leaves.

It is found in the nucleus. Binds to the G-box motif (5'-CCACGTGG-3') of the rbcS-1A gene promoter. G-box and G-box-like motifs are cis-acting elements defined in promoters of certain plant genes which are regulated by such diverse stimuli as light-induction or hormone control. GBF2 is found to bind asymmetrically to the G-box. In Arabidopsis thaliana (Mouse-ear cress), this protein is G-box-binding factor 2 (GBF2).